Here is a 129-residue protein sequence, read N- to C-terminus: 3-aminoacrylate deaminase RutC (129 aa).

Belongs to the RutC family.

The catalysed reaction is (Z)-3-aminoacrylate + H2O + H(+) = 3-oxopropanoate + NH4(+). Functionally, involved in pyrimidine catabolism. Catalyzes the deamination of 3-aminoacrylate to malonic semialdehyde, a reaction that can also occur spontaneously. RutC may facilitate the reaction and modulate the metabolic fitness, rather than catalyzing essential functions. The sequence is that of 3-aminoacrylate deaminase RutC from Yersinia enterocolitica serotype O:8 / biotype 1B (strain NCTC 13174 / 8081).